The following is a 263-amino-acid chain: Renal glandular kallikrein (263 aa).

The first 18 residues, 1 to 18, serve as a signal peptide directing secretion; sequence MWFLILFLALFLGGIDAA. Residues 19–24 constitute a propeptide, activation peptide; it reads PPVQSR. The Peptidase S1 domain maps to 25–260; it reads IIGGFNCEKN…YRSWIKDVMA (236 aa). 5 disulfides stabilise this stretch: cysteine 31–cysteine 175, cysteine 50–cysteine 66, cysteine 153–cysteine 221, cysteine 186–cysteine 200, and cysteine 211–cysteine 236. The active-site Charge relay system is the histidine 65. The N-linked (GlcNAc...) asparagine glycan is linked to asparagine 102. The active-site Charge relay system is the aspartate 121. Serine 215 serves as the catalytic Charge relay system.

It belongs to the peptidase S1 family. Kallikrein subfamily.

It catalyses the reaction Preferential cleavage of Arg-|-Xaa bonds in small molecule substrates. Highly selective action to release kallidin (lysyl-bradykinin) from kininogen involves hydrolysis of Met-|-Xaa or Leu-|-Xaa.. Functionally, glandular kallikreins cleave Met-Lys and Arg-Ser bonds in kininogen to release Lys-bradykinin. The sequence is that of Renal glandular kallikrein from Mastomys natalensis (African soft-furred rat).